Consider the following 156-residue polypeptide: Small ribosomal subunit protein uS7 (156 aa).

Belongs to the universal ribosomal protein uS7 family. As to quaternary structure, part of the 30S ribosomal subunit. Contacts proteins S9 and S11.

Functionally, one of the primary rRNA binding proteins, it binds directly to 16S rRNA where it nucleates assembly of the head domain of the 30S subunit. Is located at the subunit interface close to the decoding center, probably blocks exit of the E-site tRNA. This is Small ribosomal subunit protein uS7 from Brachyspira hyodysenteriae (strain ATCC 49526 / WA1).